A 113-amino-acid polypeptide reads, in one-letter code: Iron-sulfur cluster insertion protein ErpA (113 aa).

Cys41, Cys105, and Cys107 together coordinate iron-sulfur cluster.

This sequence belongs to the HesB/IscA family. As to quaternary structure, homodimer. Requires iron-sulfur cluster as cofactor.

In terms of biological role, required for insertion of 4Fe-4S clusters for at least IspG. The polypeptide is Iron-sulfur cluster insertion protein ErpA (Vibrio parahaemolyticus serotype O3:K6 (strain RIMD 2210633)).